Here is a 364-residue protein sequence, read N- to C-terminus: Molybdenum import ATP-binding protein ModC (364 aa).

Residues 1 to 229 (MLLIDIKKQL…PLMRPWLNAS (229 aa)) form the ABC transporter domain. 31–38 (GRSGAGKS) contacts ATP. The Mop domain maps to 293–360 (HSSIRNILPV…IKGVSVTQSD (68 aa)).

The protein belongs to the ABC transporter superfamily. Molybdate importer (TC 3.A.1.8) family. The complex is composed of two ATP-binding proteins (ModC), two transmembrane proteins (ModB) and a solute-binding protein (ModA).

The protein localises to the cell inner membrane. It carries out the reaction molybdate(out) + ATP + H2O = molybdate(in) + ADP + phosphate + H(+). Functionally, part of the ABC transporter complex ModABC involved in molybdenum import. Responsible for energy coupling to the transport system. This Aliivibrio fischeri (strain ATCC 700601 / ES114) (Vibrio fischeri) protein is Molybdenum import ATP-binding protein ModC.